The sequence spans 636 residues: Multicopper oxidase CTB12 (636 aa).

An N-terminal signal peptide occupies residues 1–23; that stretch reads MWSVRLYPLALTLLFQCVSPAAA. The Plastocyanin-like 1 domain occupies 62-168; sequence AGIGFREAIF…LYGAVVIAPD (107 aa). Positions 104 and 106 each coordinate Cu cation. N-linked (GlcNAc...) asparagine glycosylation occurs at N136. Positions 148 and 150 each coordinate Cu cation. An N-linked (GlcNAc...) asparagine glycan is attached at N304. The Plastocyanin-like 2 domain maps to 318–381; sequence LTFVNPGGLY…QEKARHVVRV (64 aa). N472 carries an N-linked (GlcNAc...) asparagine glycan. Positions 486–613 constitute a Plastocyanin-like 3 domain; sequence NVEDVPATEL…GGMGMVVLDG (128 aa). Cu cation contacts are provided by H519, H522, and H524. Residue N576 is glycosylated (N-linked (GlcNAc...) asparagine). Residues H595, C596, H597, and H601 each contribute to the Cu cation site.

The protein belongs to the multicopper oxidase family.

It participates in mycotoxin biosynthesis. In terms of biological role, multicopper oxidase; part of the gene cluster that mediates the biosynthesis of cercosporin, a light-activated, non-host-selective toxin. The perylenequinone chromophore of cercosporin absorbs light energy to attain an electronically-activated triplet state and produces active oxygen species such as the hydroxyl radical, superoxide, hydrogen peroxide or singlet oxygen upon reaction with oxygen molecules. These reactive oxygen species cause damage to various cellular components including lipids, proteins and nucleic acids. The first step of cercosporin biosynthesis is performed by the polyketide synthase CTB1 which catalyzes the formation of nor-toralactone. The starter unit acyltransferase (SAT) domain of CTB1 initiates polyketide extension by the selective utilization of acetyl-CoA, which is elongated to the heptaketide in the beta-ketoacyl synthase (KS) domain by successive condensations with six malonyl units introduced by the malonyl acyltransferase (MAT) domain. The product template (PT) domain catalyzes C4-C9 and C2-C11 aldol cyclizations and dehydrations to a trihydroxynaphthalene, which is thought to be delivered to the thioesterase (TE) domain for product release. The bifunctional enzyme CTB3 then methylates nor-toralactone to toralactone before conducting an unusual oxidative aromatic ring opening. The O-methyltransferase CTB2 further methylates the nascent OH-6 of the CBT3 product, blocking further oxidation at this site before the reductase CTB6 reduces the 2-oxopropyl ketone at position C7, giving naphthalene. The FAD-dependent monooxygenase CTB5 in concert with the multicopper oxidase CTB12 are responsible for homodimerization of naphthalene with CTB7 installing the dioxepine moiety, finally producing cercosporin. The fasciclin domain-containing protein CTB11 might act with CTB5 and CTB12 whereas the roles of CTB9 and CTB10 have still to be elucidated. This chain is Multicopper oxidase CTB12, found in Cercospora beticola (Sugarbeet leaf spot fungus).